The following is a 575-amino-acid chain: Proline--tRNA ligase 1 (575 aa).

The protein belongs to the class-II aminoacyl-tRNA synthetase family. ProS type 1 subfamily. As to quaternary structure, homodimer.

The protein resides in the cytoplasm. It carries out the reaction tRNA(Pro) + L-proline + ATP = L-prolyl-tRNA(Pro) + AMP + diphosphate. Catalyzes the attachment of proline to tRNA(Pro) in a two-step reaction: proline is first activated by ATP to form Pro-AMP and then transferred to the acceptor end of tRNA(Pro). As ProRS can inadvertently accommodate and process non-cognate amino acids such as alanine and cysteine, to avoid such errors it has two additional distinct editing activities against alanine. One activity is designated as 'pretransfer' editing and involves the tRNA(Pro)-independent hydrolysis of activated Ala-AMP. The other activity is designated 'posttransfer' editing and involves deacylation of mischarged Ala-tRNA(Pro). The misacylated Cys-tRNA(Pro) is not edited by ProRS. The polypeptide is Proline--tRNA ligase 1 (Anaeromyxobacter dehalogenans (strain 2CP-C)).